The sequence spans 531 residues: UDP-glucuronosyltransferase 1A7 (531 aa).

An N-terminal signal peptide occupies residues 1 to 25 (MAPADVPASLPLGLCLLLASGFGHA). N-linked (GlcNAc...) asparagine glycans are attached at residues Asn-71, Asn-293, and Asn-431. A helical membrane pass occupies residues 487 to 503 (LDVIGFLLAIVLTVVFI).

Belongs to the UDP-glycosyltransferase family. Homodimer. Homooligomer. Interacts with UGT1A1, UGT1A3, UGT1A4, UGT1A6, UGT1A8, UGT1A9 and UGT1A10 to form heterodimers.

It is found in the endoplasmic reticulum membrane. It carries out the reaction glucuronate acceptor + UDP-alpha-D-glucuronate = acceptor beta-D-glucuronoside + UDP + H(+). The catalysed reaction is 17alpha-estradiol + UDP-alpha-D-glucuronate = 17alpha-estradiol 3-O-(beta-D-glucuronate) + UDP + H(+). The enzyme catalyses prunetin + UDP-alpha-D-glucuronate = prunetin-5-O-beta-D-glucuronide + UDP. It catalyses the reaction 5-epi-5-F2t-IsoP + UDP-alpha-D-glucuronate = 5-epi-5-F2t-IsoP-glucuronide + UDP + H(+). It carries out the reaction (E)-ferulate + UDP-alpha-D-glucuronate = (E)-ferulic acid beta-D-glucuronate ester + UDP. The catalysed reaction is candesartan + UDP-alpha-D-glucuronate = candesartan O-beta-D-glucuronoside + UDP. The enzyme catalyses SN-38 + UDP-alpha-D-glucuronate = SN-38 O-beta-D-glucuronide + UDP + H(+). It catalyses the reaction mycophenolate + UDP-alpha-D-glucuronate = mycophenolate 7-O-beta-D-glucuronide + UDP + H(+). Its function is as follows. UDP-glucuronosyltransferase (UGT) that catalyzes phase II biotransformation reactions in which lipophilic substrates are conjugated with glucuronic acid to increase the metabolite's water solubility, thereby facilitating excretion into either the urine or bile. Essential for the elimination and detoxification of drugs, xenobiotics and endogenous compounds. Catalyzes the glucuronidation of endogenous estrogen hormone epiestradiol. Involved in the glucuronidation of F2-isoprostane (5-epi-5-F2t-IsoP). Involved in the glucuronidation of the phytochemical ferulic acid at the carboxylic acid group. Also catalyzes the glucuronidation of the isoflavones genistein, daidzein, glycitein, formononetin, biochanin A and prunetin, which are phytoestrogens with anticancer and cardiovascular properties. Involved in the glucuronidation of the AGTR1 angiotensin receptor antagonist caderastan, a drug which can inhibit the effect of angiotensin II. Involved in the biotransformation of 7-ethyl-10-hydroxycamptothecin (SN-38), the pharmacologically active metabolite of the anticancer drug irinotecan. Also metabolizes mycophenolate, an immunosuppressive agent. The chain is UDP-glucuronosyltransferase 1A7 from Rattus norvegicus (Rat).